An 84-amino-acid chain; its full sequence is Small ribosomal subunit protein uS15 (84 aa).

This sequence belongs to the universal ribosomal protein uS15 family. In terms of assembly, part of the 30S ribosomal subunit. Forms a bridge to the 50S subunit in the 70S ribosome, contacting the 23S rRNA.

In terms of biological role, one of the primary rRNA binding proteins, it binds directly to 16S rRNA where it helps nucleate assembly of the platform of the 30S subunit by binding and bridging several RNA helices of the 16S rRNA. Its function is as follows. Forms an intersubunit bridge (bridge B4) with the 23S rRNA of the 50S subunit in the ribosome. This Thermosipho africanus (strain TCF52B) protein is Small ribosomal subunit protein uS15.